Here is a 947-residue protein sequence, read N- to C-terminus: Protein translocase subunit SecA 1 (947 aa).

ATP contacts are provided by residues Gln83, 101–105 (GEGKT), and Asp490. A disordered region spans residues 860–947 (AKAQEQTGQG…KTSKPTRRRG (88 aa)). Residues 925 to 934 (TRRERREAAR) are compositionally biased toward basic and acidic residues. Residues 935 to 947 (KQAKTSKPTRRRG) show a composition bias toward basic residues.

The protein belongs to the SecA family. As to quaternary structure, monomer and homodimer. Part of the essential Sec protein translocation apparatus which comprises SecA, SecYEG and auxiliary proteins SecDF. Other proteins may also be involved.

Its subcellular location is the cell membrane. The protein resides in the cytoplasm. It carries out the reaction ATP + H2O + cellular proteinSide 1 = ADP + phosphate + cellular proteinSide 2.. Part of the Sec protein translocase complex. Interacts with the SecYEG preprotein conducting channel. Has a central role in coupling the hydrolysis of ATP to the transfer of proteins into and across the cell membrane, serving as an ATP-driven molecular motor driving the stepwise translocation of polypeptide chains across the membrane. This chain is Protein translocase subunit SecA 1, found in Mycobacterium sp. (strain KMS).